The following is a 283-amino-acid chain: Pantothenate synthetase (283 aa).

30–37 contributes to the ATP binding site; that stretch reads MGYYHSGH. His37 functions as the Proton donor in the catalytic mechanism. Gln61 contacts (R)-pantoate. Gln61 contacts beta-alanine. Residue 147 to 150 coordinates ATP; sequence GQKD. Residue Gln153 participates in (R)-pantoate binding. ATP-binding positions include Val176 and 184–187; that span reads MSSR.

Belongs to the pantothenate synthetase family. As to quaternary structure, homodimer.

Its subcellular location is the cytoplasm. The enzyme catalyses (R)-pantoate + beta-alanine + ATP = (R)-pantothenate + AMP + diphosphate + H(+). It functions in the pathway cofactor biosynthesis; (R)-pantothenate biosynthesis; (R)-pantothenate from (R)-pantoate and beta-alanine: step 1/1. In terms of biological role, catalyzes the condensation of pantoate with beta-alanine in an ATP-dependent reaction via a pantoyl-adenylate intermediate. In Nitratidesulfovibrio vulgaris (strain DSM 19637 / Miyazaki F) (Desulfovibrio vulgaris), this protein is Pantothenate synthetase.